The primary structure comprises 141 residues: Nucleoside diphosphate kinase (141 aa).

ATP contacts are provided by lysine 11, phenylalanine 59, arginine 87, threonine 93, arginine 104, and asparagine 114. Residue histidine 117 is the Pros-phosphohistidine intermediate of the active site.

It belongs to the NDK family. In terms of assembly, homotetramer. Mg(2+) is required as a cofactor.

It is found in the cytoplasm. It carries out the reaction a 2'-deoxyribonucleoside 5'-diphosphate + ATP = a 2'-deoxyribonucleoside 5'-triphosphate + ADP. It catalyses the reaction a ribonucleoside 5'-diphosphate + ATP = a ribonucleoside 5'-triphosphate + ADP. Major role in the synthesis of nucleoside triphosphates other than ATP. The ATP gamma phosphate is transferred to the NDP beta phosphate via a ping-pong mechanism, using a phosphorylated active-site intermediate. In Delftia acidovorans (strain DSM 14801 / SPH-1), this protein is Nucleoside diphosphate kinase.